A 557-amino-acid polypeptide reads, in one-letter code: Probable asparagine synthetase [glutamine-hydrolyzing] (557 aa).

Cysteine 2 serves as the catalytic For GATase activity. Residues 2–188 (CGILAVHHVA…PGHYYDSETK (187 aa)) form the Glutamine amidotransferase type-2 domain. Residues 50-54 (RLAIV), 75-77 (NGE), and aspartate 99 each bind L-glutamine. The region spanning 196-531 (PSWWDENKIP…PRQCADTVMR (336 aa)) is the Asparagine synthetase domain. Residues leucine 235, isoleucine 280, and 354–355 (SG) each bind ATP. Phosphoserine occurs at positions 391 and 489.

It is found in the cytoplasm. Its subcellular location is the nucleus. The enzyme catalyses L-aspartate + L-glutamine + ATP + H2O = L-asparagine + L-glutamate + AMP + diphosphate + H(+). It participates in amino-acid biosynthesis; L-asparagine biosynthesis; L-asparagine from L-aspartate (L-Gln route): step 1/1. The chain is Probable asparagine synthetase [glutamine-hydrolyzing] (asn1) from Schizosaccharomyces pombe (strain 972 / ATCC 24843) (Fission yeast).